A 467-amino-acid chain; its full sequence is L-seryl-tRNA(Sec) selenium transferase (467 aa).

N6-(pyridoxal phosphate)lysine is present on K298.

This sequence belongs to the SelA family. It depends on pyridoxal 5'-phosphate as a cofactor.

It localises to the cytoplasm. The catalysed reaction is L-seryl-tRNA(Sec) + selenophosphate + H(+) = L-selenocysteinyl-tRNA(Sec) + phosphate. Its pathway is aminoacyl-tRNA biosynthesis; selenocysteinyl-tRNA(Sec) biosynthesis; selenocysteinyl-tRNA(Sec) from L-seryl-tRNA(Sec) (bacterial route): step 1/1. Functionally, converts seryl-tRNA(Sec) to selenocysteinyl-tRNA(Sec) required for selenoprotein biosynthesis. In Alkaliphilus metalliredigens (strain QYMF), this protein is L-seryl-tRNA(Sec) selenium transferase.